We begin with the raw amino-acid sequence, 421 residues long: D-aspartate ligase (421 aa).

The region spanning 130-332 (YEVCEEYDLP…LARFVTEDRV (203 aa)) is the ATP-grasp domain. 161–224 (PFEFPVALKP…QDFIPGDDSN (64 aa)) contacts ATP. 3 residues coordinate Mg(2+): Asp290, Glu304, and Asn306.

Requires Mg(2+) as cofactor.

It carries out the reaction [beta-GlcNAc-(1-&gt;4)-Mur2Ac(oyl-L-Ala-gamma-D-Glu-L-Lys-D-Ala-D-Ala)](n) + n D-aspartate + n ATP = [beta-GlcNAc-(1-&gt;4)-Mur2Ac(oyl-L-Ala-gamma-D-Glu-6-N-(beta-D-Asp)-L-Lys-D-Ala-D-Ala)]n + n ADP + n phosphate + n H(+). Its pathway is cell wall biogenesis; peptidoglycan biosynthesis. In terms of biological role, catalyzes the addition of D-aspartate onto the lysine residue in the peptidoglycan precursor UDP-MurNAc-pentapeptide. The ligation occurs between the beta-carboxylate of D-Asp and the epsilon-amino group of L-Lys. Is highly specific for D-aspartate, as L-aspartate, D-glutamate, D-alanine, D-iso-asparagine and D-malate are not substrates. This Enterococcus faecium (strain Aus0004) protein is D-aspartate ligase.